We begin with the raw amino-acid sequence, 947 residues long: Altered inheritance of mitochondria protein 3 (947 aa).

3 disordered regions span residues 1 to 334 (MGFW…LLPQ), 354 to 810 (MSST…QDEV), and 824 to 904 (RKTN…KSLE). The span at 36-54 (ASKKHYNNSKARRERKSGK) shows a compositional bias: basic residues. Phosphoserine occurs at positions 57, 58, and 64. The segment covering 59–69 (DEEYDSEDEME) has biased composition (acidic residues). A compositionally biased stretch (basic and acidic residues) spans 70–84 (YERKPTDIRSLKDPK). Low complexity-rich tracts occupy residues 93 to 105 (PGQK…QQQQ) and 130 to 163 (QSQY…GVVP). A compositionally biased stretch (polar residues) spans 177–255 (GSNSNATSYQ…YVSHGSTNLG (79 aa)). Low complexity-rich tracts occupy residues 256-289 (QSQF…QQGQ) and 313-334 (QQQQ…LLPQ). Residues 354-367 (MSSTTNMQDSNPSY) show a composition bias toward polar residues. Over residues 379–395 (GGQPPVPVRMQPQPPQP) the composition is skewed to pro residues. Residues 466 to 475 (IQPNTTSSAA) show a composition bias toward polar residues. The residue at position 476 (serine 476) is a Phosphoserine. A compositionally biased stretch (basic and acidic residues) spans 488–502 (DNERNSGNKENDEST). A compositionally biased stretch (polar residues) spans 633 to 644 (VPQSKPQSQSQF). The span at 667–676 (SQSSNSSDSS) shows a compositional bias: low complexity. Phosphothreonine is present on threonine 729. Residues 749–759 (DSSKDANKYEK) show a composition bias toward basic and acidic residues. The span at 763–774 (PVTSSIQAQQST) shows a compositional bias: polar residues. Threonine 861 carries the phosphothreonine modification. The span at 862 to 879 (PPRPPPSRSSPKKVPPVV) shows a compositional bias: pro residues. The span at 888 to 899 (KKPPVVPKKKPL) shows a compositional bias: basic residues.

This sequence belongs to the AIM3 family. As to quaternary structure, interacts with RVS167.

It is found in the membrane raft. This is Altered inheritance of mitochondria protein 3 (AIM3) from Saccharomyces cerevisiae (strain ATCC 204508 / S288c) (Baker's yeast).